Reading from the N-terminus, the 100-residue chain is MIREERLLKVLRAPHVSEKASAAMEKNNTIVLKVAKDATKAEIKAAVQKLFEVEVEDVNTLLVKGKSKRHGQRVGRRSDWKKAYVTLKEGQNLDFIGGAE.

The protein belongs to the universal ribosomal protein uL23 family. As to quaternary structure, part of the 50S ribosomal subunit. Contacts protein L29, and trigger factor when it is bound to the ribosome.

In terms of biological role, one of the early assembly proteins it binds 23S rRNA. One of the proteins that surrounds the polypeptide exit tunnel on the outside of the ribosome. Forms the main docking site for trigger factor binding to the ribosome. This chain is Large ribosomal subunit protein uL23, found in Yersinia enterocolitica serotype O:8 / biotype 1B (strain NCTC 13174 / 8081).